The chain runs to 301 residues: Oxygen-dependent coproporphyrinogen-III oxidase (301 aa).

S92 provides a ligand contact to substrate. Residues H96 and H106 each contribute to the a divalent metal cation site. H106 serves as the catalytic Proton donor. A substrate-binding site is contributed by 108–110 (NVR). Positions 145 and 175 each coordinate a divalent metal cation. Positions 240–275 (YVEFNLVWDRGTLFGLQTGGRTESILMSMPPLVRWE) are important for dimerization. Residue 258–260 (GGR) participates in substrate binding.

Belongs to the aerobic coproporphyrinogen-III oxidase family. As to quaternary structure, homodimer. Requires a divalent metal cation as cofactor.

The protein localises to the cytoplasm. It carries out the reaction coproporphyrinogen III + O2 + 2 H(+) = protoporphyrinogen IX + 2 CO2 + 2 H2O. It participates in porphyrin-containing compound metabolism; protoporphyrin-IX biosynthesis; protoporphyrinogen-IX from coproporphyrinogen-III (O2 route): step 1/1. Its function is as follows. Involved in the heme biosynthesis. Catalyzes the aerobic oxidative decarboxylation of propionate groups of rings A and B of coproporphyrinogen-III to yield the vinyl groups in protoporphyrinogen-IX. In Cronobacter sakazakii (strain ATCC BAA-894) (Enterobacter sakazakii), this protein is Oxygen-dependent coproporphyrinogen-III oxidase.